The following is a 124-amino-acid chain: Prefoldin subunit beta (124 aa).

This sequence belongs to the prefoldin subunit beta family. Heterohexamer of two alpha and four beta subunits.

It localises to the cytoplasm. Functionally, molecular chaperone capable of stabilizing a range of proteins. Seems to fulfill an ATP-independent, HSP70-like function in archaeal de novo protein folding. The protein is Prefoldin subunit beta (pfdB) of Thermoplasma volcanium (strain ATCC 51530 / DSM 4299 / JCM 9571 / NBRC 15438 / GSS1).